Reading from the N-terminus, the 185-residue chain is Large ribosomal subunit protein uL5 (185 aa).

It belongs to the universal ribosomal protein uL5 family. In terms of assembly, part of the 50S ribosomal subunit; part of the 5S rRNA/L5/L18/L25 subcomplex. Contacts the 5S rRNA and the P site tRNA. Forms a bridge to the 30S subunit in the 70S ribosome.

Its function is as follows. This is one of the proteins that bind and probably mediate the attachment of the 5S RNA into the large ribosomal subunit, where it forms part of the central protuberance. In the 70S ribosome it contacts protein S13 of the 30S subunit (bridge B1b), connecting the 2 subunits; this bridge is implicated in subunit movement. Contacts the P site tRNA; the 5S rRNA and some of its associated proteins might help stabilize positioning of ribosome-bound tRNAs. This chain is Large ribosomal subunit protein uL5, found in Nitrobacter hamburgensis (strain DSM 10229 / NCIMB 13809 / X14).